We begin with the raw amino-acid sequence, 240 residues long: MLTRKQHELLLFIHERLKETGIPPSFDEMKEALDLASKSGIHRLITALEERGFIRRLPNRARALEVLRLPDSIAPGLSPQKKFAPSVIEGSLGKVASVQPVRPAPAPQNSEAPATVSVPVMGRIAAGVPISAIQNQTHMLSLPPEMIGAGEHYALEVKGDSMIDAGIFDGDTIIIKRGDTANPGEIVVALVDEEEATLKRFRREGASIALEAANPAYETRIFGPDRVHVQGKLVGLIRRY.

A DNA-binding region (H-T-H motif) is located at residues 26 to 46 (FDEMKEALDLASKSGIHRLIT). Residues S161 and K199 each act as for autocatalytic cleavage activity in the active site.

The protein belongs to the peptidase S24 family. As to quaternary structure, homodimer.

It carries out the reaction Hydrolysis of Ala-|-Gly bond in repressor LexA.. Functionally, represses a number of genes involved in the response to DNA damage (SOS response), including recA and lexA. In the presence of single-stranded DNA, RecA interacts with LexA causing an autocatalytic cleavage which disrupts the DNA-binding part of LexA, leading to derepression of the SOS regulon and eventually DNA repair. The chain is LexA repressor from Brucella melitensis biotype 1 (strain ATCC 23456 / CCUG 17765 / NCTC 10094 / 16M).